A 159-amino-acid chain; its full sequence is Transmembrane protein 92 (159 aa).

Residues 1–26 form the signal peptide; sequence MSQAWVPGLAPTLLFSLLAGPQKIAA. Topologically, residues 27–57 are extracellular; sequence KCGLILACPKGFKCCGDSCCQENELFPGPVR. The chain crosses the membrane as a helical span at residues 58-78; it reads IFVIIFLVILSVFCICGLAKC. At 79 to 159 the chain is on the cytoplasmic side; it reads FCRNCREPEP…DQRGIDNPAF (81 aa). Positions 122–159 are disordered; that stretch reads EVILKPSLGPTPTEPPPPYSFRPEEYTGDQRGIDNPAF.

It localises to the membrane. The chain is Transmembrane protein 92 (TMEM92) from Homo sapiens (Human).